Reading from the N-terminus, the 202-residue chain is Holliday junction resolvase RecU (202 aa).

Residues Thr-85, Asp-87, Glu-100, and Gln-119 each coordinate Mg(2+).

Belongs to the RecU family. Requires Mg(2+) as cofactor.

It localises to the cytoplasm. The enzyme catalyses Endonucleolytic cleavage at a junction such as a reciprocal single-stranded crossover between two homologous DNA duplexes (Holliday junction).. Endonuclease that resolves Holliday junction intermediates in genetic recombination. Cleaves mobile four-strand junctions by introducing symmetrical nicks in paired strands. Promotes annealing of linear ssDNA with homologous dsDNA. Required for DNA repair, homologous recombination and chromosome segregation. This Streptococcus uberis (strain ATCC BAA-854 / 0140J) protein is Holliday junction resolvase RecU.